We begin with the raw amino-acid sequence, 584 residues long: Mitochondrial sodium/calcium exchanger protein (584 aa).

Residues 1 to 26 form the signal peptide; it reads MAGRRLNLRWALSVLCVLLMAETVSG. Residues 27-95 are Extracellular-facing; the sequence is TRGSSTGAHI…GIFCHFPPSL (69 aa). The N-linked (GlcNAc...) asparagine glycan is linked to N60. A helical membrane pass occupies residues 96–116; it reads LPLAVTLYVSWLLYLFLILGV. Residues 117–140 lie on the Cytoplasmic side of the membrane; sequence TAAKFFCPNLSAISTTLKLSHNVA. A helical membrane pass occupies residues 141 to 161; the sequence is GVTFLAFGNGAPDIFSALVAF. Over 162–168 the chain is Extracellular; that stretch reads SDPHTAG. A helical membrane pass occupies residues 169 to 189; it reads LALGALFGAGVLVTTVVAGGI. Residues 190-200 lie on the Cytoplasmic side of the membrane; sequence TILHPFMAASR. A helical transmembrane segment spans residues 201 to 221; the sequence is PFFRDIVFYMVAVFLTFLMLF. Over 222 to 226 the chain is Extracellular; the sequence is RGRVT. Residues 227 to 247 traverse the membrane as a helical segment; sequence LAWALGYLGLYVFYVVTVILC. Residues 248 to 325 are Cytoplasmic-facing; sequence TWIYQRQRRG…KWRRKSAYWK (78 aa). At S258 the chain carries Phosphoserine; by PKA. Residues 326-346 traverse the membrane as a helical segment; the sequence is ALKVFKLPVEFLLLLTVPVVD. The Extracellular segment spans residues 347–360; it reads PDKDDQNWKRPLNC. Residues 361-381 form a helical membrane-spanning segment; it reads LHLVISPLVVVLTLQSGTYGV. Over 382–383 the chain is Cytoplasmic; it reads YE. Residues 384 to 404 form a helical membrane-spanning segment; it reads IGGLVPVWVVVVIAGTALASV. Residues 405–416 lie on the Extracellular side of the membrane; the sequence is TFFATSDSQPPR. A helical transmembrane segment spans residues 417 to 437; the sequence is LHWLFAFLGFLTSALWINAAA. Topologically, residues 438-445 are cytoplasmic; the sequence is TEVVNILR. Residues 446–466 form a helical membrane-spanning segment; that stretch reads SLGVVFRLSNTVLGLTLLAWG. At 467–487 the chain is on the extracellular side; sequence NSIGDAFSDFTLARQGYPRMA. Residues 488–508 traverse the membrane as a helical segment; that stretch reads FSACFGGIIFNILVGVGLGCL. At 509 to 524 the chain is on the cytoplasmic side; sequence LQISRSHTEVKLEPDG. Residues 525–545 form a helical membrane-spanning segment; the sequence is LLVWVLAGALGLSLVFSLVSV. Residues 546 to 558 are Extracellular-facing; the sequence is PLQCFQLSRVYGF. A helical membrane pass occupies residues 559-579; it reads CLLLFYLNFLVVALLTEFGVI. The Cytoplasmic segment spans residues 580 to 584; it reads HLKSM.

The protein belongs to the Ca(2+):cation antiporter (CaCA) (TC 2.A.19) family. SLC24A subfamily. Phosphorylation at Ser-258 by PKA prevents calcium overload. Present in pancreatic beta-cells (at protein level).

The protein resides in the mitochondrion inner membrane. The enzyme catalyses Ca(2+)(in) + 3 Na(+)(out) = Ca(2+)(out) + 3 Na(+)(in). The catalysed reaction is 3 Li(+)(out) + Ca(2+)(in) = 3 Li(+)(in) + Ca(2+)(out). Its activity is regulated as follows. Inhibited by the sodium/calcium exchanger inhibitor CGP-37157. Strongly inhibited by zinc. Its function is as follows. Mitochondrial sodium/calcium antiporter that mediates sodium-dependent calcium efflux from mitochondrion, by mediating the exchange of 3 sodium ions per 1 calcium ion. Plays a central role in mitochondrial calcium homeostasis by mediating mitochondrial calcium extrusion: calcium efflux is essential for mitochondrial function and cell survival, notably in cardiomyocytes. Regulates rates of glucose-dependent insulin secretion in pancreatic beta-cells during the first phase of insulin secretion: acts by mediating efflux of calcium from mitochondrion, thereby affecting cytoplasmic calcium responses. Required for store-operated Ca(2+) entry (SOCE) and Ca(2+) release-activated Ca(2+) (CRAC) channel regulation: sodium transport by SLC8B1 leads to promote calcium-shuttling that modulates mitochondrial redox status, thereby regulating SOCE activity. Involved in B-lymphocyte chemotaxis. Able to transport Ca(2+) in exchange of either Li(+) or Na(+), explaining how Li(+) catalyzes Ca(2+) exchange. In contrast to other members of the family its function is independent of K(+). The sequence is that of Mitochondrial sodium/calcium exchanger protein from Homo sapiens (Human).